A 139-amino-acid chain; its full sequence is Probable cytochrome b5 (139 aa).

Positions 2–78 (SAEFTYQDVA…LEPLLVGTLK (77 aa)) constitute a Cytochrome b5 heme-binding domain. Residues His37 and His61 each contribute to the heme site. A helical transmembrane segment spans residues 105–125 (GLGIGLYAVLVLGGLAGFAAY).

The protein belongs to the cytochrome b5 family.

It localises to the endoplasmic reticulum membrane. The protein resides in the microsome membrane. Membrane bound hemoprotein which function as an electron carrier for several membrane bound oxygenases. The polypeptide is Probable cytochrome b5 (Neurospora crassa (strain ATCC 24698 / 74-OR23-1A / CBS 708.71 / DSM 1257 / FGSC 987)).